Reading from the N-terminus, the 132-residue chain is Small ribosomal subunit protein uS8 (132 aa).

Belongs to the universal ribosomal protein uS8 family. Part of the 30S ribosomal subunit. Contacts proteins S5 and S12.

In terms of biological role, one of the primary rRNA binding proteins, it binds directly to 16S rRNA central domain where it helps coordinate assembly of the platform of the 30S subunit. This Bradyrhizobium sp. (strain ORS 278) protein is Small ribosomal subunit protein uS8.